Consider the following 27-residue polypeptide: Caerulein precursor fragment R1 (27 aa).

Expressed by the skin glands.

The protein resides in the secreted. In terms of biological role, antimicrobial peptide. The chain is Caerulein precursor fragment R1 from Xenopus ruwenzoriensis (Uganda clawed frog).